The chain runs to 116 residues: Peptidyl-tRNA hydrolase (116 aa).

It belongs to the PTH2 family.

The protein resides in the cytoplasm. It carries out the reaction an N-acyl-L-alpha-aminoacyl-tRNA + H2O = an N-acyl-L-amino acid + a tRNA + H(+). In terms of biological role, the natural substrate for this enzyme may be peptidyl-tRNAs which drop off the ribosome during protein synthesis. This chain is Peptidyl-tRNA hydrolase, found in Methanococcus vannielii (strain ATCC 35089 / DSM 1224 / JCM 13029 / OCM 148 / SB).